Here is a 383-residue protein sequence, read N- to C-terminus: Multidrug resistance protein MexA (383 aa).

The first 23 residues, 1 to 23 (MQRTPAMRVLVPALLVAISALSG), serve as a signal peptide directing secretion. Residue Cys-24 is the site of N-palmitoyl cysteine attachment. A lipid anchor (S-diacylglycerol cysteine) is attached at Cys-24. Positions 97–151 (ATYEADYQSAQANLASTQEQAQRYKLLVADQAVSKQQYADANAAYLQSKAAVEQA) form a coiled coil.

This sequence belongs to the membrane fusion protein (MFP) (TC 8.A.1) family. As to quaternary structure, component of the MexAB-OprM multidrug efflux complex, composed of six MexA subunits forming a hexameric tube, binding to a MexB trimer, which interact with the trimeric OprM outer membrane channel protein. OprM is thought to not directly contact MexB; instead, MexA joins MexB and OprM by forming a funnel-like hexamer anchored to the inner membrane. MexA may initially form a hexameric ring complex with MexB prior to OprM, then OprM undergoes a conformational change as it contacts MexA, allowing the periplasmic gate to open. It is thought that, under high intracellular substrate concentration, MexB ejects substrate into the tunnel formed by MexA-OprM; as the substrate level declines, conformational changes in MexB cause efflux to reduce and stop and the complex shifts to the closed state. MexB subunit acts as a substrate:proton antiporter and activity is enhanced significantly when in complex with MexA and OprM, in vitro.

It localises to the cell inner membrane. Its activity is regulated as follows. Export of antibiotics and solvents is dramatically decreased in the presence of the protonophore carbonyl cyanide m-chlorophenylhydrazone (CCCP), therefore may be driven by a proton gradient. Antibiotic efflux is inhibited by pyridopyrimidine derivatives, such as ABI-PP, acting by binding to a hydrophobic pocket in MexB. In terms of biological role, the periplasmic linker component of the MexAB-OprM efflux system that confers multidrug resistance. Functions as the major efflux pump for n-hexane and p-xylene efflux. Has been shown in one study to be involved in the active efflux of the autoinducer N-(3-oxododecanoyl) homoserine lactone, thereby playing an indirect role in quorum-sensing; but has been shown in another study not to be involved in efflux of this autoinducer. Over-expression of the pump increases antibiotic and solvent efflux capacities. Implicated in the secretion of the siderophore pyoverdine. This is Multidrug resistance protein MexA (mexA) from Pseudomonas aeruginosa (strain ATCC 15692 / DSM 22644 / CIP 104116 / JCM 14847 / LMG 12228 / 1C / PRS 101 / PAO1).